The chain runs to 453 residues: tRNA modification GTPase MnmE (453 aa).

Residues Arg-28, Glu-90, and Arg-129 each coordinate (6S)-5-formyl-5,6,7,8-tetrahydrofolate. The TrmE-type G domain maps to 224-375; the sequence is GLRVAIIGRP…LSSALLKLCG (152 aa). Asn-234 is a binding site for K(+). GTP is bound by residues 234 to 239, 253 to 259, 278 to 281, and 356 to 358; these read NVGKSS, TDLPGTT, DTAG, and SAR. Mg(2+) is bound at residue Ser-238. The K(+) site is built by Thr-253, Leu-255, and Thr-258. Thr-259 contacts Mg(2+). (6S)-5-formyl-5,6,7,8-tetrahydrofolate is bound at residue Lys-453.

Belongs to the TRAFAC class TrmE-Era-EngA-EngB-Septin-like GTPase superfamily. TrmE GTPase family. Homodimer. Heterotetramer of two MnmE and two MnmG subunits. K(+) is required as a cofactor.

The protein resides in the cytoplasm. Its function is as follows. Exhibits a very high intrinsic GTPase hydrolysis rate. Involved in the addition of a carboxymethylaminomethyl (cmnm) group at the wobble position (U34) of certain tRNAs, forming tRNA-cmnm(5)s(2)U34. This chain is tRNA modification GTPase MnmE, found in Synechococcus sp. (strain RCC307).